Consider the following 549-residue polypeptide: Thermosome subunit alpha (549 aa).

The segment at 529-549 (EGRQGAECPPNGCMGGMDMRM) is disordered.

The protein belongs to the TCP-1 chaperonin family. Forms a Heterooligomeric complex of two stacked eight-membered rings.

Its function is as follows. Molecular chaperone; binds unfolded polypeptides in vitro, and has a weak ATPase activity. In Thermococcus sp. (strain KS-8), this protein is Thermosome subunit alpha (thsA).